A 551-amino-acid polypeptide reads, in one-letter code: Probable alpha-glucosidase (551 aa).

Residue aspartate 212 is the Nucleophile of the active site. Catalysis depends on glutamate 272, which acts as the Proton donor.

This sequence belongs to the glycosyl hydrolase 13 family.

The catalysed reaction is Hydrolysis of terminal, non-reducing (1-&gt;4)-linked alpha-D-glucose residues with release of alpha-D-glucose.. This Rhizobium meliloti (strain 1021) (Ensifer meliloti) protein is Probable alpha-glucosidase (aglA).